Here is a 24-residue protein sequence, read N- to C-terminus: Prokineticin 1-like protein (24 aa).

An intrachain disulfide couples C7 to C19.

In terms of tissue distribution, expressed by the skin glands.

It localises to the secreted. Its function is as follows. Stimulates insulin secretion by BRIN-BD11 cells in vitro. The sequence is that of Prokineticin 1-like protein from Pelophylax saharicus (Sahara frog).